The following is a 710-amino-acid chain: Polyribonucleotide nucleotidyltransferase (710 aa).

2 residues coordinate Mg(2+): Asp489 and Asp495. In terms of domain architecture, KH spans 556-615 (PKIDTIKIDVDKIKVVIGKGGETIDKIIAETGVKIDIDDEGNVSIYSSDQAAINRTKEII). An S1 motif domain is found at 625-693 (GEVYHAKVVR…EKGRVDASMK (69 aa)). Residues 691–710 (SMKALIPRPPKPEKKEEKHD) form a disordered region. Residues 700-710 (PKPEKKEEKHD) show a composition bias toward basic and acidic residues.

It depends on Mg(2+) as a cofactor.

It is found in the cytoplasm. The enzyme catalyses RNA(n+1) + phosphate = RNA(n) + a ribonucleoside 5'-diphosphate. Its function is as follows. Involved in mRNA degradation. Catalyzes the phosphorolysis of single-stranded polyribonucleotides processively in the 3'- to 5'-direction. The protein is Polyribonucleotide nucleotidyltransferase of Streptococcus pyogenes serotype M6 (strain ATCC BAA-946 / MGAS10394).